The following is a 92-amino-acid chain: Defensin-like protein 226 (92 aa).

The N-terminal stretch at 1-27 is a signal peptide; that stretch reads MKCGVLFMISCLLITFLVLSHVREVES. 4 disulfides stabilise this stretch: C33-C92, C43-C71, C51-C86, and C69-C88.

This sequence belongs to the DEFL family.

It localises to the secreted. This chain is Defensin-like protein 226 (SCRL2), found in Arabidopsis thaliana (Mouse-ear cress).